Reading from the N-terminus, the 291-residue chain is Methylsterol monooxygenase 1-3 (291 aa).

The next 3 helical transmembrane spans lie at 41–61 (TILV…IVEW), 92–112 (FLLV…MVGI), and 114–134 (SGLP…YFLI). The Fatty acid hydroxylase domain maps to 128 to 263 (LVVYFLIEDY…FTYCDYIYGT (136 aa)). The Histidine box-1 motif lies at 143 to 147 (HRWMH). The Histidine box-2 motif lies at 156-160 (HRIHH). A helical transmembrane segment spans residues 178-198 (ILILGIPTFLGPAIAPGHIMT). The short motif at 235–241 (YHDYHHY) is the Histidine box-3 element.

The protein belongs to the sterol desaturase family. As to quaternary structure, interacts with ACBP1. Fe cation is required as a cofactor. As to expression, expressed at low levels in leaves, roots, siliques and flowers.

The protein localises to the endoplasmic reticulum membrane. The enzyme catalyses 4,4-dimethyl-5alpha-cholest-7-en-3beta-ol + 6 Fe(II)-[cytochrome b5] + 3 O2 + 5 H(+) = 4alpha-carboxy-4beta-methyl-5alpha-cholest-7-ene-3beta-ol + 6 Fe(III)-[cytochrome b5] + 4 H2O. The catalysed reaction is 24-methylidenelophenol + 6 Fe(II)-[cytochrome b5] + 3 O2 + 5 H(+) = 4alpha-carboxy-ergosta-7,24(24(1))-dien-3beta-ol + 6 Fe(III)-[cytochrome b5] + 4 H2O. Non-heme iron oxygenase involved in sterols biosynthesis by catalyzing the removal of the first methyl group at the C-4 position. 4,4-dimethyl-9-beta,19-cyclopropylsterols such as 24-methylenecycloartanol are the preferred substrates. The sequence is that of Methylsterol monooxygenase 1-3 from Arabidopsis thaliana (Mouse-ear cress).